Here is a 425-residue protein sequence, read N- to C-terminus: Histidine--tRNA ligase (425 aa).

Belongs to the class-II aminoacyl-tRNA synthetase family. In terms of assembly, homodimer.

It is found in the cytoplasm. It catalyses the reaction tRNA(His) + L-histidine + ATP = L-histidyl-tRNA(His) + AMP + diphosphate + H(+). The chain is Histidine--tRNA ligase from Chlorobium chlorochromatii (strain CaD3).